We begin with the raw amino-acid sequence, 957 residues long: Glycine dehydrogenase (decarboxylating) (957 aa).

N6-(pyridoxal phosphate)lysine is present on lysine 708.

Belongs to the GcvP family. In terms of assembly, the glycine cleavage system is composed of four proteins: P, T, L and H. The cofactor is pyridoxal 5'-phosphate.

The catalysed reaction is N(6)-[(R)-lipoyl]-L-lysyl-[glycine-cleavage complex H protein] + glycine + H(+) = N(6)-[(R)-S(8)-aminomethyldihydrolipoyl]-L-lysyl-[glycine-cleavage complex H protein] + CO2. Functionally, the glycine cleavage system catalyzes the degradation of glycine. The P protein binds the alpha-amino group of glycine through its pyridoxal phosphate cofactor; CO(2) is released and the remaining methylamine moiety is then transferred to the lipoamide cofactor of the H protein. In Escherichia coli O157:H7, this protein is Glycine dehydrogenase (decarboxylating).